Here is a 64-residue protein sequence, read N- to C-terminus: Alpha-conotoxin-like Lt1.3 (64 aa).

Positions 1 to 21 (MGMRMMFTMFLLVVLTTTVVS) are cleaved as a signal peptide. A propeptide spanning residues 22–45 (FNLDRESNHENRRTSNQITRGMWD) is cleaved from the precursor. 2 disulfide bridges follow: Cys47–Cys53 and Cys48–Cys61. Positions 49 to 51 (DDP) are lacks the Ser-Xaa-Pro motif that is crucial for potent interaction with nAChR.

The protein belongs to the conotoxin A superfamily. Expressed by the venom duct.

The protein resides in the secreted. Alpha-conotoxins act on postsynaptic membranes, they bind to the nicotinic acetylcholine receptors (nAChR) and thus inhibit them. Has possibly a distinct nAChR binding mode from other alpha-conotoxins, due to a different three residue motif (lacks the Ser-Xaa-Pro motif). In Conus litteratus (Lettered cone), this protein is Alpha-conotoxin-like Lt1.3.